The sequence spans 953 residues: UvrABC system protein A (953 aa).

Residue 33 to 40 (GLSGSGKS) participates in ATP binding. ABC transporter domains lie at 320 to 599 (WGST…EESI) and 619 to 949 (GHDN…RYLK). Residue 652 to 659 (GVSGSGKS) coordinates ATP. The segment at 752–778 (CEACQGDGLIKIEMHFLPDVYVKCDIC) adopts a C4-type zinc-finger fold.

The protein belongs to the ABC transporter superfamily. UvrA family. As to quaternary structure, forms a heterotetramer with UvrB during the search for lesions.

The protein localises to the cytoplasm. In terms of biological role, the UvrABC repair system catalyzes the recognition and processing of DNA lesions. UvrA is an ATPase and a DNA-binding protein. A damage recognition complex composed of 2 UvrA and 2 UvrB subunits scans DNA for abnormalities. When the presence of a lesion has been verified by UvrB, the UvrA molecules dissociate. In Rickettsia prowazekii (strain Madrid E), this protein is UvrABC system protein A.